We begin with the raw amino-acid sequence, 473 residues long: UDP-N-acetylmuramate--L-alanine ligase (473 aa).

An ATP-binding site is contributed by 114 to 120 (GTHGKTT).

This sequence belongs to the MurCDEF family.

The protein localises to the cytoplasm. The catalysed reaction is UDP-N-acetyl-alpha-D-muramate + L-alanine + ATP = UDP-N-acetyl-alpha-D-muramoyl-L-alanine + ADP + phosphate + H(+). It participates in cell wall biogenesis; peptidoglycan biosynthesis. Its function is as follows. Cell wall formation. This chain is UDP-N-acetylmuramate--L-alanine ligase, found in Chlorobium luteolum (strain DSM 273 / BCRC 81028 / 2530) (Pelodictyon luteolum).